A 417-amino-acid polypeptide reads, in one-letter code: Methyltransferase/ribosomally synthesized cyclic peptide dendrothelin A precursor dbihMA (417 aa).

The tract at residues 1 to 251 (MESSTQTKPG…GVSTFYIPPK (251 aa)) is methyltransferase domain. Active-site residues include R72, Y76, and Y98. The S-adenosyl-L-methionine site is built by Y98, H100, V103, A130, Q172, A213, S244, and T245. Residues 252-378 (ARKDINTDII…WAIRCAMKNM (127 aa)) are clasp domain. Residues 379 to 399 (PSSLLEAASQSVEEASMNGFP) form a precursor leader region. V401 and V403 each carry N-methylvaline. N-methylthreonine is present on T404. G405 bears the N-methylglycine mark. I406 carries the post-translational modification N-methylisoleucine. V407 is modified (N-methylvaline). G408 carries the post-translational modification N-methylglycine. Position 410 is an N-methylisoleucine (I410). Residue G411 is modified to N-methylglycine. V413 is modified (N-methylvaline).

The protein in the N-terminal section; belongs to the precorrin methyltransferase family. Homodimer. In terms of processing, dbiMA automethylates at Val-401, Val-403, Thr-404, Gly-405, Ile-406, Val-407, Gly-408, Ile-410, Gly-411 and Val-413 before being processed by the prolyloligopeptidase dbiP which likely forms a peptidyl ester upon removal of the follower propeptide, which then undergoes macrocyclization with the N-terminus of the modified core peptide. Peptide backbone alpha-N-methylations change the physicochemical properties of amide bonds to provide structural constraints and other favorable characteristics including biological membrane permeability to peptides.

It participates in mycotoxin biosynthesis. In terms of biological role, fusion protein of the methyltransferase dbiM and the dendrothelin core peptide; part of the gene cluster that mediates the biosynthesis of dendrothelin A, a highly methylated cyclic dodecapeptide showing slight nematodicidal activity. Dendrothelin A derives from the C-terminus of the dbiMA protein, and it is the dbiMA protein that methylates its own C-terminus using S-adenosyl methionine (SAM). The C-terminus is subsequently cleaved off and macrocyclized by the prolyloligopeptidase dbiP to give the final product. The protein is Methyltransferase/ribosomally synthesized cyclic peptide dendrothelin A precursor dbihMA of Dendrothele bispora (strain CBS 962.96).